The following is a 549-amino-acid chain: MLTFHRIIRKGWMFLLAFLLTALLFCPTGQPAKAAAPFNGTMMQYFEWYLPDDGTLWTKVANEANNLSSLGITALWLPPAYKGTSRSDVGYGVYDLYDLGEFNQKGAVRTKYGTKAQYLQAIQAAHAAGMQVYADVVFDHKGGADGTEWVDAVEVNPSDRNQEISGTYQIQAWTKFDFPGRGNTYSSFKWRWYHFDGVDWDESRKLSRIYKFRGIGKAWDWEVDTENGNYDYLMYADLDMDHPEVVTELKSWGKWYVNTTNIDGFRLDAVKHIKFSFFPDWLSDVRSQTGKPLFTVGEYWSYDINKLHNYIMKTNGTMSLFDAPLHNKFYTASKSGGTFDMRTLMTNTLMKDQPTLAVTFVDNHDTEPGQALQSWVDPWFKPLAYAFILTRQEGYPCVFYGDYYGIPQYNIPSLKSKIDPLLIARRDYAYGTQHDYLDHSDIIGWTREGVTEKPGSGLAALITDGPGGSKWMYVGKQHAGKVFYDLTGNRSDTVTINSDGWGEFKVNGGSVSVWVPRKTTVSTIAWSITTRPWTDEFVRWTEPRLVAWP.

The first 34 residues, 1 to 34, serve as a signal peptide directing secretion; the sequence is MLTFHRIIRKGWMFLLAFLLTALLFCPTGQPAKA. 6 residues coordinate Ca(2+): Asp-139, Asp-196, Ala-218, Asp-220, Asp-231, and Asp-237. Position 196 (Asp-196) interacts with Na(+). Na(+) is bound by residues Asp-220, Asp-231, Asp-237, and Leu-238. Asp-239 contacts Ca(2+). Asp-268 (nucleophile) is an active-site residue. Position 272 (His-272) interacts with Ca(2+). Glu-298 functions as the Proton donor in the catalytic mechanism. Positions 337, 339, 440, 441, and 464 each coordinate Ca(2+).

Belongs to the glycosyl hydrolase 13 family. In terms of assembly, monomer. Requires Ca(2+) as cofactor. Na(+) serves as cofactor.

The protein localises to the secreted. The catalysed reaction is Endohydrolysis of (1-&gt;4)-alpha-D-glucosidic linkages in polysaccharides containing three or more (1-&gt;4)-alpha-linked D-glucose units.. This is Alpha-amylase (amyS) from Geobacillus stearothermophilus (Bacillus stearothermophilus).